The following is a 212-amino-acid chain: Methylthioribulose-1-phosphate dehydratase (212 aa).

Zn(2+)-binding residues include His97 and His99.

The protein belongs to the aldolase class II family. MtnB subfamily. In terms of assembly, homotetramer. The cofactor is Zn(2+).

The enzyme catalyses 5-(methylsulfanyl)-D-ribulose 1-phosphate = 5-methylsulfanyl-2,3-dioxopentyl phosphate + H2O. It participates in amino-acid biosynthesis; L-methionine biosynthesis via salvage pathway; L-methionine from S-methyl-5-thio-alpha-D-ribose 1-phosphate: step 2/6. Its function is as follows. Catalyzes the dehydration of methylthioribulose-1-phosphate (MTRu-1-P) into 2,3-diketo-5-methylthiopentyl-1-phosphate (DK-MTP-1-P). This is Methylthioribulose-1-phosphate dehydratase from Bacillus cereus (strain ATCC 10987 / NRS 248).